A 119-amino-acid chain; its full sequence is Protein yippee-like 3 (119 aa).

The region spanning 19–116 is the Yippee domain; the sequence is RRYSCVHCRA…IELSHMIKDN (98 aa). Positions 23, 26, 79, and 82 each coordinate Zn(2+).

This sequence belongs to the yippee family.

It is found in the nucleus. The protein localises to the nucleolus. Functionally, may be involved in proliferation and apoptosis in myeloid precursor cells. In Danio rerio (Zebrafish), this protein is Protein yippee-like 3 (ypel3).